The sequence spans 883 residues: Integrator complex subunit 6 (883 aa).

Positions 3–227 (ILLFLIDTSA…QCLESLVQKV (225 aa)) constitute a VWFA domain. Positions 625-632 (MMIDEADE) match the Inhibitory loop motif. Residues 666–686 (RRQSPAVNSHIGGKGPPAPMT) are disordered. The residue at position 800 (Ser800) is a Phosphoserine.

The protein belongs to the Integrator subunit 6 family. As to quaternary structure, component of the Integrator complex, composed of core subunits INTS1, INTS2, INTS3, INTS4, INTS5, INTS6, INTS7, INTS8, INTS9/RC74, INTS10, INTS11/CPSF3L, INTS12, INTS13, INTS14 and INTS15. The core complex associates with protein phosphatase 2A subunits PPP2CA and PPP2R1A, to form the Integrator-PP2A (INTAC) complex.

It localises to the nucleus. The protein resides in the chromosome. Component of the integrator complex, a multiprotein complex that terminates RNA polymerase II (Pol II) transcription in the promoter-proximal region of genes. The integrator complex provides a quality checkpoint during transcription elongation by driving premature transcription termination of transcripts that are unfavorably configured for transcriptional elongation: the complex terminates transcription by (1) catalyzing dephosphorylation of the C-terminal domain (CTD) of Pol II subunit POLR2A/RPB1 and SUPT5H/SPT5, (2) degrading the exiting nascent RNA transcript via endonuclease activity and (3) promoting the release of Pol II from bound DNA. The integrator complex is also involved in terminating the synthesis of non-coding Pol II transcripts, such as enhancer RNAs (eRNAs), small nuclear RNAs (snRNAs), telomerase RNAs and long non-coding RNAs (lncRNAs). Within the integrator complex, INTS6 acts as a molecular adapter that promotes assembly of protein phosphatase 2A (PP2A) subunits to the integrator core complex, promoting recruitment of PP2A to transcription pause-release checkpoint. Mediates recruitment of cytoplasmic dynein to the nuclear envelope, probably as component of the integrator complex. In Mus musculus (Mouse), this protein is Integrator complex subunit 6 (Ints6).